The primary structure comprises 366 residues: UDP-N-acetylglucosamine--N-acetylmuramyl-(pentapeptide) pyrophosphoryl-undecaprenol N-acetylglucosamine transferase (366 aa).

Residues 14-16, Asn-125, Arg-168, Ser-196, and Gln-297 each bind UDP-N-acetyl-alpha-D-glucosamine; that span reads TGG.

It belongs to the glycosyltransferase 28 family. MurG subfamily.

Its subcellular location is the cell inner membrane. It catalyses the reaction di-trans,octa-cis-undecaprenyl diphospho-N-acetyl-alpha-D-muramoyl-L-alanyl-D-glutamyl-meso-2,6-diaminopimeloyl-D-alanyl-D-alanine + UDP-N-acetyl-alpha-D-glucosamine = di-trans,octa-cis-undecaprenyl diphospho-[N-acetyl-alpha-D-glucosaminyl-(1-&gt;4)]-N-acetyl-alpha-D-muramoyl-L-alanyl-D-glutamyl-meso-2,6-diaminopimeloyl-D-alanyl-D-alanine + UDP + H(+). It functions in the pathway cell wall biogenesis; peptidoglycan biosynthesis. Its function is as follows. Cell wall formation. Catalyzes the transfer of a GlcNAc subunit on undecaprenyl-pyrophosphoryl-MurNAc-pentapeptide (lipid intermediate I) to form undecaprenyl-pyrophosphoryl-MurNAc-(pentapeptide)GlcNAc (lipid intermediate II). This Rhodopseudomonas palustris (strain BisB5) protein is UDP-N-acetylglucosamine--N-acetylmuramyl-(pentapeptide) pyrophosphoryl-undecaprenol N-acetylglucosamine transferase.